Reading from the N-terminus, the 647-residue chain is Solute carrier family 23 member 2 (647 aa).

Positions 1–11 (MMGVGKNTSKS) are enriched in polar residues. A disordered region spans residues 1-26 (MMGVGKNTSKSVEVGGSTEGKYEEEA). Residues 8-109 (TSKSVEVGGS…LCIFLGLQHY (102 aa)) lie on the Cytoplasmic side of the membrane. At Ser-69 the chain carries Phosphoserine. The residue at position 74 (Thr-74) is a Phosphothreonine. A Phosphoserine modification is found at Ser-77. Thr-78 is modified (phosphothreonine). Ser-80 is subject to Phosphoserine. A helical membrane pass occupies residues 110–130 (LTCFSGTIAVPFLLADAMCVG). The Extracellular segment spans residues 131–138 (DDQWATSQ). A helical membrane pass occupies residues 139–159 (LIGTIFFCVGITTLLQTTFGC). Position 160 (Arg-160) is a topological domain, cytoplasmic. Residues 161-181 (LPLFQASAFAFLAPARAILSL) form a helical membrane-spanning segment. Over 182-215 (DKWKCNTTEITVANGTAELLEHIWHPRIQEIQGA) the chain is Extracellular. N-linked (GlcNAc...) asparagine glycans are attached at residues Asn-187 and Asn-195. The chain crosses the membrane as a helical span at residues 216-236 (IIMSSLIEVVIGLLGLPGALL). Residues 237–263 (RYIGPLTITPTVALIGLSGFQAAGERA) lie on the Cytoplasmic side of the membrane. A helical transmembrane segment spans residues 264–281 (GKHWGIAMLTIFLVLLFS). Residues 282 to 285 (QYAR) lie on the Extracellular side of the membrane. The segment at residues 286 to 299 (NVKFPLPIYKSKKG) is an intramembrane region (helical). Over 300 to 306 (WTAYKLQ) the chain is Extracellular. Residues 307-327 (LFKMFPIILAILVSWLLCFIF) traverse the membrane as a helical segment. Residues 328–368 (TVTDVFPSNSTDYGYYARTDARKGVLLVAPWFKVPYPFQWG) are Cytoplasmic-facing. The helical transmembrane segment at 369 to 389 (MPTVSAAGVIGMLSAVVASII) threads the bilayer. Topologically, residues 390–414 (ESIGDYYACARLSCAPPPPIHAINR) are extracellular. The helical transmembrane segment at 415 to 435 (GIFVEGLSCVLDGVFGTGNGS) threads the bilayer. Residues 436–458 (TSSSPNIGVLGITKVGSRRVIQY) are Cytoplasmic-facing. A helical membrane pass occupies residues 459-479 (GAALMLGLGMIGKFSALFASL). The Extracellular portion of the chain corresponds to 480-482 (PDP). A helical transmembrane segment spans residues 483–503 (VLGALFCTLFGMITAVGLSNL). Over 504–513 (QFIDLNSSRN) the chain is Cytoplasmic. Residues 514-534 (LFVLGFSIFFGLVLPSYLRQN) form a helical membrane-spanning segment. The Extracellular portion of the chain corresponds to 535 to 544 (PLVTGITGID). The helical transmembrane segment at 545–565 (QVLNVLLTTAMFVGGCVAFIL) threads the bilayer. Residues 566 to 647 (DNTIPGTPEE…SSDKDSQATV (82 aa)) lie on the Cytoplasmic side of the membrane. A Phosphothreonine modification is found at Thr-646.

It belongs to the nucleobase:cation symporter-2 (NCS2) (TC 2.A.40) family. As to quaternary structure, interacts with CLSTN3. Phosphorylated. As to expression, highly expressed in neural, neuroendocrine, exocrine and endothelial tissues and in osteoblasts. Detected in neurons throughout the central nervous system, in meninges and choroid plexus, in the anterior pituitary, the intermediate lobe, in pancreas, adrenal cortex, gastric glands, and in the inner nuclear layer of the retina.

The protein localises to the cell membrane. The catalysed reaction is L-ascorbate(out) + 2 Na(+)(out) = L-ascorbate(in) + 2 Na(+)(in). In terms of biological role, sodium/ascorbate cotransporter. Mediates electrogenic uptake of vitamin C, with a stoichiometry of 2 Na(+) for each ascorbate. The protein is Solute carrier family 23 member 2 (Slc23a2) of Rattus norvegicus (Rat).